The primary structure comprises 294 residues: tRNA-uridine aminocarboxypropyltransferase 1 (294 aa).

The segment at 158-185 (DMQNDSSCEPSLKRPKCSQQYDKSKNEG) is disordered. A DXTW motif is present at residues 202 to 205 (DSTW).

This sequence belongs to the TDD superfamily. DTWD1 family.

The protein resides in the nucleus. It catalyses the reaction a uridine in tRNA + S-adenosyl-L-methionine = a 3-[(3S)-3-amino-3-carboxypropyl]uridine in tRNA + S-methyl-5'-thioadenosine + H(+). Functionally, catalyzes the formation of 3-(3-amino-3-carboxypropyl)uridine (acp3U) at position 20 in the D-loop of several cytoplasmic tRNAs (acp3U(20)). The protein is tRNA-uridine aminocarboxypropyltransferase 1 of Xenopus tropicalis (Western clawed frog).